Reading from the N-terminus, the 394-residue chain is Elongation factor Tu (394 aa).

The 195-residue stretch at 10 to 204 (KPHVNVGTIG…ALDTYIPEPE (195 aa)) folds into the tr-type G domain. The segment at 19 to 26 (GHVDHGKT) is G1. 19-26 (GHVDHGKT) serves as a coordination point for GTP. Thr-26 serves as a coordination point for Mg(2+). The G2 stretch occupies residues 60–64 (GITIA). The tract at residues 81–84 (DCPG) is G3. Residues 81–85 (DCPGH) and 136–139 (NKCD) contribute to the GTP site. Residues 136 to 139 (NKCD) form a G4 region. A G5 region spans residues 174-176 (SAL).

This sequence belongs to the TRAFAC class translation factor GTPase superfamily. Classic translation factor GTPase family. EF-Tu/EF-1A subfamily. In terms of assembly, monomer.

It is found in the cytoplasm. It catalyses the reaction GTP + H2O = GDP + phosphate + H(+). GTP hydrolase that promotes the GTP-dependent binding of aminoacyl-tRNA to the A-site of ribosomes during protein biosynthesis. The protein is Elongation factor Tu of Vibrio parahaemolyticus serotype O3:K6 (strain RIMD 2210633).